A 964-amino-acid chain; its full sequence is Iron-responsive element-binding protein 2 (964 aa).

[4Fe-4S] cluster is bound by residues Cys513, Cys579, and Cys582.

Belongs to the aconitase/IPM isomerase family. As to quaternary structure, interacts with RBCK1 only in iron-rich conditions. Interacts (when associated with the 4Fe-4S) with FBXL5. Interacts with CIAO1 and CIAO2A. [4Fe-4S] cluster is required as a cofactor. Ubiquitinated and degraded by the proteasome in presence of high level of iron and oxygen. Ubiquitinated by a SCF complex containing FBXL5. Upon iron and oxygen depletion FBXL5 is degraded, preventing ubiquitination and allowing its RNA-binding activity.

It localises to the cytoplasm. In terms of biological role, RNA-binding protein that binds to iron-responsive elements (IRES), which are stem-loop structures found in the 5'-UTR of ferritin, and delta aminolevulinic acid synthase mRNAs, and in the 3'-UTR of transferrin receptor mRNA. Binding to the IRE element in ferritin results in the repression of its mRNA translation. Binding of the protein to the transferrin receptor mRNA inhibits the degradation of this otherwise rapidly degraded mRNA. The polypeptide is Iron-responsive element-binding protein 2 (IREB2) (Sus scrofa (Pig)).